A 260-amino-acid chain; its full sequence is tRNA1(Val) (adenine(37)-N6)-methyltransferase (260 aa).

Belongs to the methyltransferase superfamily. tRNA (adenine-N(6)-)-methyltransferase family.

The protein resides in the cytoplasm. The catalysed reaction is adenosine(37) in tRNA1(Val) + S-adenosyl-L-methionine = N(6)-methyladenosine(37) in tRNA1(Val) + S-adenosyl-L-homocysteine + H(+). Functionally, specifically methylates the adenine in position 37 of tRNA(1)(Val) (anticodon cmo5UAC). This chain is tRNA1(Val) (adenine(37)-N6)-methyltransferase, found in Serratia proteamaculans (strain 568).